Consider the following 371-residue polypeptide: Cytochrome b (371 aa).

A run of 4 helical transmembrane segments spans residues 25–45 (FGSMLLACSSMQVLTGFFLAV), 69–90 (WMMQNLHAIGASMFFICIYIHI), 105–125 (WLSGTTLLIMLMATAXXXXXX), and 170–190 (XXXXXXILPFGIISLSSLHIM). Heme b-binding residues include His75 and His89. The heme b site is built by Xaa174 and His188. Position 193 (His193) interacts with a ubiquinone. Transmembrane regions (helical) follow at residues 218 to 238 (YKDLLMLSLMVLTLLMTVSFL), 280 to 300 (LGGALALAMSIMILLTTPFTH), 312 to 332 (IMQLMFWTLVATFVVITWAAT), and 339 to 358 (FTMISQVASTMYFLFFITNP).

The protein belongs to the cytochrome b family. As to quaternary structure, the cytochrome bc1 complex contains 3 respiratory subunits (MT-CYB, CYC1 and UQCRFS1), 2 core proteins (UQCRC1 and UQCRC2) and probably 6 low-molecular weight proteins. Requires heme b as cofactor.

It localises to the mitochondrion inner membrane. Functionally, component of the ubiquinol-cytochrome c reductase complex (complex III or cytochrome b-c1 complex) that is part of the mitochondrial respiratory chain. The b-c1 complex mediates electron transfer from ubiquinol to cytochrome c. Contributes to the generation of a proton gradient across the mitochondrial membrane that is then used for ATP synthesis. The sequence is that of Cytochrome b (MT-CYB) from Eryx jaculus (Javelin sand boa).